The primary structure comprises 515 residues: RNA-binding region-containing protein 3 (515 aa).

The tract at residues 1 to 26 (MAVPEPSMPLSRGGPGSASLSPPRGD) is disordered. S21 carries the phosphoserine modification. In terms of domain architecture, RRM 1 spans 27–102 (RTLLVRHLPA…HTLVVEFAKE (76 aa)). 3 disordered regions span residues 107–133 (HSSC…EKKE), 215–254 (LHAP…EEDR), and 337–369 (ETEQ…PKPN). S108 carries the phosphoserine modification. The span at 115 to 133 (AEKKKRLDDTVENDKEKKE) shows a compositional bias: basic and acidic residues. A compositionally biased stretch (pro residues) spans 218 to 230 (PLPPTSPQPPEEP). Residues 337–348 (ETEQNNEEKNSD) are compositionally biased toward basic and acidic residues. At S349 the chain carries Phosphoserine. Residues 419 to 502 (CRIYVKNLAR…KPMVVQFARS (84 aa)) form the RRM 2 domain.

Component of the U11/U12 snRNPs that are part of the U12-type spliceosome. Found in a complex with m(7)G-capped U12 snRNA. Interacts with PDCD7.

Its subcellular location is the nucleus. Participates in pre-mRNA U12-dependent splicing, performed by the minor spliceosome which removes U12-type introns. U12-type introns comprises less than 1% of all non-coding sequences. Binds to the 3'-stem-loop of m(7)G-capped U12 snRNA. This chain is RNA-binding region-containing protein 3 (Rnpc3), found in Rattus norvegicus (Rat).